Here is a 247-residue protein sequence, read N- to C-terminus: ATP synthase subunit a, chloroplastic (247 aa).

Transmembrane regions (helical) follow at residues 38–58 (QVLI…VIAV), 95–115 (VPFI…GALL), 134–154 (INTT…AGLS), 199–219 (LVVV…VMFL), and 220–240 (GLFT…AYIG).

The protein belongs to the ATPase A chain family. As to quaternary structure, F-type ATPases have 2 components, CF(1) - the catalytic core - and CF(0) - the membrane proton channel. CF(1) has five subunits: alpha(3), beta(3), gamma(1), delta(1), epsilon(1). CF(0) has four main subunits: a, b, b' and c.

It localises to the plastid. The protein resides in the chloroplast thylakoid membrane. In terms of biological role, key component of the proton channel; it plays a direct role in the translocation of protons across the membrane. The chain is ATP synthase subunit a, chloroplastic from Lolium perenne (Perennial ryegrass).